A 1217-amino-acid chain; its full sequence is DNA-directed RNA polymerase subunit beta' (1217 aa).

Zn(2+) is bound by residues Cys-60, Cys-62, Cys-75, and Cys-78. Residues Asp-449, Asp-451, and Asp-453 each contribute to the Mg(2+) site. Residues Cys-821, Cys-895, Cys-902, and Cys-905 each coordinate Zn(2+).

This sequence belongs to the RNA polymerase beta' chain family. In terms of assembly, the RNAP catalytic core consists of 2 alpha, 1 beta, 1 beta' and 1 omega subunit. When a sigma factor is associated with the core the holoenzyme is formed, which can initiate transcription. Mg(2+) is required as a cofactor. It depends on Zn(2+) as a cofactor.

It carries out the reaction RNA(n) + a ribonucleoside 5'-triphosphate = RNA(n+1) + diphosphate. DNA-dependent RNA polymerase catalyzes the transcription of DNA into RNA using the four ribonucleoside triphosphates as substrates. In Lactobacillus helveticus (strain DPC 4571), this protein is DNA-directed RNA polymerase subunit beta'.